The primary structure comprises 101 residues: NADH-quinone oxidoreductase subunit K (101 aa).

The next 3 helical transmembrane spans lie at 4–24 (LGHM…GIFL), 30–50 (IVLL…FVAF), and 62–82 (FVFF…AILV).

This sequence belongs to the complex I subunit 4L family. NDH-1 is composed of 14 different subunits. Subunits NuoA, H, J, K, L, M, N constitute the membrane sector of the complex.

The protein resides in the cell inner membrane. It catalyses the reaction a quinone + NADH + 5 H(+)(in) = a quinol + NAD(+) + 4 H(+)(out). Its function is as follows. NDH-1 shuttles electrons from NADH, via FMN and iron-sulfur (Fe-S) centers, to quinones in the respiratory chain. The immediate electron acceptor for the enzyme in this species is believed to be ubiquinone. Couples the redox reaction to proton translocation (for every two electrons transferred, four hydrogen ions are translocated across the cytoplasmic membrane), and thus conserves the redox energy in a proton gradient. The polypeptide is NADH-quinone oxidoreductase subunit K (Stenotrophomonas maltophilia (strain R551-3)).